The sequence spans 175 residues: Clathrin-associated protein AP-3 complex component APS3 (175 aa).

The protein belongs to the adaptor complexes small subunit family. Adaptor protein complex 3 (AP-3) is a heterotetramer composed of 2 large adaptins, a medium adaptin and a small adaptin.

It is found in the golgi apparatus. Its subcellular location is the cytoplasmic vesicle membrane. In terms of biological role, part of the AP-3 complex, an adapter-related complex which is not clathrin-associated. The complex is associated with the Golgi region as well as more peripheral structures. It facilitates the budding of vesicles from the Golgi membrane. Involved in vacuolar trafficking and contributes to hyphal growth and pathogenesis. This Candida albicans (strain SC5314 / ATCC MYA-2876) (Yeast) protein is Clathrin-associated protein AP-3 complex component APS3 (APS3).